We begin with the raw amino-acid sequence, 363 residues long: 3-dehydroquinate synthase (363 aa).

NAD(+) contacts are provided by residues 75-80 (DAEEGK), 109-113 (GAVTD), 133-134 (TS), Lys-146, Lys-155, and 173-176 (TLST). Residues Glu-188, His-251, and His-267 each contribute to the Zn(2+) site.

Belongs to the sugar phosphate cyclases superfamily. Dehydroquinate synthase family. Co(2+) is required as a cofactor. It depends on Zn(2+) as a cofactor. NAD(+) serves as cofactor.

It localises to the cytoplasm. It carries out the reaction 7-phospho-2-dehydro-3-deoxy-D-arabino-heptonate = 3-dehydroquinate + phosphate. It participates in metabolic intermediate biosynthesis; chorismate biosynthesis; chorismate from D-erythrose 4-phosphate and phosphoenolpyruvate: step 2/7. In terms of biological role, catalyzes the conversion of 3-deoxy-D-arabino-heptulosonate 7-phosphate (DAHP) to dehydroquinate (DHQ). In Arthrobacter sp. (strain FB24), this protein is 3-dehydroquinate synthase.